The chain runs to 258 residues: 1-(5-phosphoribosyl)-5-[(5-phosphoribosylamino)methylideneamino] imidazole-4-carboxamide isomerase (258 aa).

Aspartate 9 functions as the Proton acceptor in the catalytic mechanism. Aspartate 131 serves as the catalytic Proton donor.

Belongs to the HisA/HisF family.

The protein resides in the cytoplasm. It carries out the reaction 1-(5-phospho-beta-D-ribosyl)-5-[(5-phospho-beta-D-ribosylamino)methylideneamino]imidazole-4-carboxamide = 5-[(5-phospho-1-deoxy-D-ribulos-1-ylimino)methylamino]-1-(5-phospho-beta-D-ribosyl)imidazole-4-carboxamide. The protein operates within amino-acid biosynthesis; L-histidine biosynthesis; L-histidine from 5-phospho-alpha-D-ribose 1-diphosphate: step 4/9. The sequence is that of 1-(5-phosphoribosyl)-5-[(5-phosphoribosylamino)methylideneamino] imidazole-4-carboxamide isomerase from Salinibacter ruber (strain DSM 13855 / M31).